The primary structure comprises 433 residues: 3-phosphoshikimate 1-carboxyvinyltransferase (433 aa).

3-phosphoshikimate contacts are provided by Lys-22, Ser-23, and Arg-27. Lys-22 contacts phosphoenolpyruvate. Phosphoenolpyruvate contacts are provided by Gly-94 and Arg-122. 3-phosphoshikimate contacts are provided by Ser-168, Ser-169, Gln-170, Ser-196, Asp-319, and Lys-346. A phosphoenolpyruvate-binding site is contributed by Gln-170. The active-site Proton acceptor is Asp-319. 3 residues coordinate phosphoenolpyruvate: Arg-350, Arg-394, and Lys-418.

Belongs to the EPSP synthase family. In terms of assembly, monomer.

The protein resides in the cytoplasm. It catalyses the reaction 3-phosphoshikimate + phosphoenolpyruvate = 5-O-(1-carboxyvinyl)-3-phosphoshikimate + phosphate. The protein operates within metabolic intermediate biosynthesis; chorismate biosynthesis; chorismate from D-erythrose 4-phosphate and phosphoenolpyruvate: step 6/7. In terms of biological role, catalyzes the transfer of the enolpyruvyl moiety of phosphoenolpyruvate (PEP) to the 5-hydroxyl of shikimate-3-phosphate (S3P) to produce enolpyruvyl shikimate-3-phosphate and inorganic phosphate. The sequence is that of 3-phosphoshikimate 1-carboxyvinyltransferase from Nitrosomonas eutropha (strain DSM 101675 / C91 / Nm57).